Reading from the N-terminus, the 86-residue chain is MKTLLLTLVVVTIVCLDLGYTLTCVTGKSIGGISTEECAAGQKICFKKWTKMGPKLYDVSRGCTATCPKADEYGCVKCCKTDRCNK.

The signal sequence occupies residues 1–21 (MKTLLLTLVVVTIVCLDLGYT). Disulfide bonds link C24–C45, C38–C63, C67–C78, and C79–C84.

Belongs to the three-finger toxin family. Short-chain subfamily. Aminergic toxin sub-subfamily. In terms of tissue distribution, expressed by the venom gland.

The protein resides in the secreted. This Dendroaspis angusticeps (Eastern green mamba) protein is Synergistic-like venom protein.